The chain runs to 208 residues: Small ribosomal subunit protein uS4 (208 aa).

Positions 31-50 (SALDKRAYGPGQHGQRRTKT) are disordered. The region spanning 98-161 (RRLDNVVYRM…KSNPQVVRAM (64 aa)) is the S4 RNA-binding domain.

The protein belongs to the universal ribosomal protein uS4 family. In terms of assembly, part of the 30S ribosomal subunit. Contacts protein S5. The interaction surface between S4 and S5 is involved in control of translational fidelity.

Functionally, one of the primary rRNA binding proteins, it binds directly to 16S rRNA where it nucleates assembly of the body of the 30S subunit. In terms of biological role, with S5 and S12 plays an important role in translational accuracy. The sequence is that of Small ribosomal subunit protein uS4 from Helicobacter pylori (strain J99 / ATCC 700824) (Campylobacter pylori J99).